The primary structure comprises 355 residues: tRNA (guanine-N(1)-)-methyltransferase (355 aa).

Residues Gly109 and 129 to 134 contribute to the S-adenosyl-L-methionine site; that span reads IGDYVL.

Belongs to the RNA methyltransferase TrmD family. Homodimer.

The protein localises to the cytoplasm. The catalysed reaction is guanosine(37) in tRNA + S-adenosyl-L-methionine = N(1)-methylguanosine(37) in tRNA + S-adenosyl-L-homocysteine + H(+). Functionally, specifically methylates guanosine-37 in various tRNAs. The chain is tRNA (guanine-N(1)-)-methyltransferase from Chlamydia caviae (strain ATCC VR-813 / DSM 19441 / 03DC25 / GPIC) (Chlamydophila caviae).